The primary structure comprises 468 residues: ATP synthase subunit beta (468 aa).

155–162 (GGAGVGKT) contributes to the ATP binding site.

It belongs to the ATPase alpha/beta chains family. In terms of assembly, F-type ATPases have 2 components, CF(1) - the catalytic core - and CF(0) - the membrane proton channel. CF(1) has five subunits: alpha(3), beta(3), gamma(1), delta(1), epsilon(1). CF(0) has three main subunits: a(1), b(2) and c(9-12). The alpha and beta chains form an alternating ring which encloses part of the gamma chain. CF(1) is attached to CF(0) by a central stalk formed by the gamma and epsilon chains, while a peripheral stalk is formed by the delta and b chains.

Its subcellular location is the cell membrane. The catalysed reaction is ATP + H2O + 4 H(+)(in) = ADP + phosphate + 5 H(+)(out). Its function is as follows. Produces ATP from ADP in the presence of a proton gradient across the membrane. The catalytic sites are hosted primarily by the beta subunits. The polypeptide is ATP synthase subunit beta (Streptococcus thermophilus (strain CNRZ 1066)).